A 126-amino-acid polypeptide reads, in one-letter code: Adenosine 5'-monophosphoramidase HINT1 (126 aa).

Ala2 is modified (N-acetylalanine). One can recognise an HIT domain in the interval 18–126; sequence IFGKIIRKEI…GGRQMNWPPG (109 aa). N6-acetyllysine is present on residues Lys21 and Lys30. Residue 43–44 coordinates AMP; sequence DI. Residues Ser45 and Ser72 each carry the phosphoserine modification. AMP contacts are provided by residues Asn99, 105-107, and 112-114; these read GQS and HLH. A Histidine triad motif motif is present at residues 110–114; the sequence is HVHLH. The active-site Tele-AMP-histidine intermediate is the His112.

This sequence belongs to the HINT family. As to quaternary structure, homodimer. Interacts with CDK7. Interacts with RUVBL1 and RUVBL2 and is associated with the LEF1/TCF1-CTNNB1 complex and with a KAT5 histone acetyltransferase complex. Identified in a complex with MITF and CTNNB1. Interacts with CDC34 and RBX1, and is part of a SCF (SKP2-CUL1-F-box protein) E3 ubiquitin-protein ligase complex. Interacts with SUMO1, SUMO2 and RGS17. Interacts with the Ten-1 ICD form of TENM1. Interacts with CALM1; interaction increases in the presence of calcium ions. As to expression, widely expressed.

The protein localises to the cytoplasm. It localises to the nucleus. It catalyses the reaction adenosine 5'-phosphoramidate + H2O = AMP + NH4(+). Functionally, exhibits adenosine 5'-monophosphoramidase activity, hydrolyzing purine nucleotide phosphoramidates with a single phosphate group such as adenosine 5'monophosphoramidate (AMP-NH2) to yield AMP and NH2. Hydrolyzes adenosine 5'monophosphomorpholidate (AMP-morpholidate) and guanosine 5'monophosphomorpholidate (GMP-morpholidate). Hydrolyzes lysyl-AMP (AMP-N-epsilon-(N-alpha-acetyl lysine methyl ester)) generated by lysine tRNA ligase, as well as Met-AMP, His-AMP and Asp-AMP, lysyl-GMP (GMP-N-epsilon-(N-alpha-acetyl lysine methyl ester)) and AMP-N-alanine methyl ester. Can also convert adenosine 5'-O-phosphorothioate and guanosine 5'-O-phosphorothioate to the corresponding nucleoside 5'-O-phosphates with concomitant release of hydrogen sulfide. In addition, functions as a scaffolding protein that modulates transcriptional activation by the LEF1/TCF1-CTNNB1 complex and by the complex formed with MITF and CTNNB1. Modulates p53/TP53 levels and p53/TP53-mediated apoptosis. Modulates proteasomal degradation of target proteins by the SCF (SKP2-CUL1-F-box protein) E3 ubiquitin-protein ligase complex. Also exhibits SUMO-specific isopeptidase activity, deconjugating SUMO1 from RANGAP1 and RGS17. This is Adenosine 5'-monophosphoramidase HINT1 (HINT1) from Bos taurus (Bovine).